Here is a 287-residue protein sequence, read N- to C-terminus: Shikimate dehydrogenase (NADP(+)) (287 aa).

Residues Ser18–Ser20 and Thr66 each bind shikimate. Catalysis depends on Lys70, which acts as the Proton acceptor. Residue Glu82 participates in NADP(+) binding. The shikimate site is built by Asn91 and Asp106. Residues Gly130 to Ala134 and Met228 contribute to the NADP(+) site. Tyr230 serves as a coordination point for shikimate. Gly251 contacts NADP(+).

It belongs to the shikimate dehydrogenase family. In terms of assembly, homodimer.

It catalyses the reaction shikimate + NADP(+) = 3-dehydroshikimate + NADPH + H(+). It participates in metabolic intermediate biosynthesis; chorismate biosynthesis; chorismate from D-erythrose 4-phosphate and phosphoenolpyruvate: step 4/7. Its function is as follows. Involved in the biosynthesis of the chorismate, which leads to the biosynthesis of aromatic amino acids. Catalyzes the reversible NADPH linked reduction of 3-dehydroshikimate (DHSA) to yield shikimate (SA). This Chlorobium chlorochromatii (strain CaD3) protein is Shikimate dehydrogenase (NADP(+)).